Here is a 467-residue protein sequence, read N- to C-terminus: Multiple inositol polyphosphate phosphatase 1 (467 aa).

Residues 1 to 15 form the signal peptide; sequence MRLLILLLLPLVAIA. His-67 is an active-site residue. Asn-120, Asn-159, and Asn-234 each carry an N-linked (GlcNAc...) asparagine glycan. Gly-441 carries the GPI-anchor amidated glycine lipid modification. The propeptide at 442–467 is removed in mature form; it reads GAPSLGSGVGGLLATTLAAMLVYLMH.

This sequence belongs to the histidine acid phosphatase family. MINPP1 subfamily. Post-translationally, N-glycosylated.

The protein resides in the cell membrane. The protein localises to the apical cell membrane. It is found in the basolateral cell membrane. Its subcellular location is the cell projection. It localises to the filopodium. The protein resides in the cell junction. It catalyses the reaction (2R)-2,3-bisphosphoglycerate + H2O = (2R)-2-phosphoglycerate + phosphate. It carries out the reaction 1D-myo-inositol hexakisphosphate + H2O = 1D-myo-inositol 1,2,4,5,6-pentakisphosphate + phosphate. The enzyme catalyses 1D-myo-inositol 1,2,4,5,6-pentakisphosphate + H2O = 1D-myo-inositol 1,2,5,6-tetrakisphosphate + phosphate. The catalysed reaction is 1D-myo-inositol 1,2,5,6-tetrakisphosphate + H2O = 1D-myo-inositol 1,2,6-trisphosphate + phosphate. Its function is as follows. Probable multiple inositol polyphosphate phosphatase that hydrolyzes 1D-myo-inositol 1,3,4,5,6-pentakisphosphate (InsP5[2OH]) and 1D-myo-inositol hexakisphosphate (InsP6) to a range of less phosphorylated inositol phosphates. This regulates the availability of these various small molecule second messengers and metal chelators which control many aspects of cell physiology. May have a dual substrate specificity, and function as a 2,3-bisphosphoglycerate 3-phosphatase hydrolyzing 2,3-bisphosphoglycerate to 2-phosphoglycerate. 2,3-bisphosphoglycerate (BPG) is formed as part of the Rapoport-Luebering glycolytic bypass. Has a role in embryonic tracheal development where it localizes to the leading edge of actively migrating branches. In these leading cells, enhances formation and/or maintenance of filopodia which may drive branch migration and elongation by cell-cell intercalation. The function in tracheal morphogenesis is dependent on its inositol polyphosphate phosphatase activity. This Drosophila melanogaster (Fruit fly) protein is Multiple inositol polyphosphate phosphatase 1.